The following is a 218-amino-acid chain: Trimethylamine corrinoid protein 2 (218 aa).

Residues 1 to 92 (MAGKEEIIAK…EMEKRKSQTK (92 aa)) enclose the B12-binding N-terminal domain. The B12-binding domain maps to 94-218 (LGTVIIGTIE…AKVKAALKVG (125 aa)). H107 is a methylcob(III)alamin binding site.

It belongs to the methylamine corrinoid protein family. In terms of assembly, can form a complex with MttB.

The protein operates within one-carbon metabolism; methanogenesis from trimethylamine. Functionally, acts probably as a methyl group carrier between MttB and either MtbA or MtaA. In Methanosarcina mazei (strain ATCC BAA-159 / DSM 3647 / Goe1 / Go1 / JCM 11833 / OCM 88) (Methanosarcina frisia), this protein is Trimethylamine corrinoid protein 2 (mttC2).